Here is a 629-residue protein sequence, read N- to C-terminus: DNA ligase B (629 aa).

Lysine 151 (N6-AMP-lysine intermediate) is an active-site residue. Residues 588–597 (LQKQHGTNTR) show a composition bias toward polar residues. A disordered region spans residues 588–629 (LQKQHGTNTRNEQKGDVRRVDVKQDNGTTWLPEQDSNLRPND). Positions 598–611 (NEQKGDVRRVDVKQ) are enriched in basic and acidic residues. Residues 612–629 (DNGTTWLPEQDSNLRPND) show a composition bias toward polar residues.

The protein belongs to the NAD-dependent DNA ligase family. LigB subfamily.

The catalysed reaction is NAD(+) + (deoxyribonucleotide)n-3'-hydroxyl + 5'-phospho-(deoxyribonucleotide)m = (deoxyribonucleotide)n+m + AMP + beta-nicotinamide D-nucleotide.. Functionally, catalyzes the formation of phosphodiester linkages between 5'-phosphoryl and 3'-hydroxyl groups in double-stranded DNA using NAD as a coenzyme and as the energy source for the reaction. This chain is DNA ligase B, found in Chromohalobacter salexigens (strain ATCC BAA-138 / DSM 3043 / CIP 106854 / NCIMB 13768 / 1H11).